The primary structure comprises 93 residues: UPF0358 protein OB1428 (93 aa).

The protein belongs to the UPF0358 family.

The protein is UPF0358 protein OB1428 of Oceanobacillus iheyensis (strain DSM 14371 / CIP 107618 / JCM 11309 / KCTC 3954 / HTE831).